Reading from the N-terminus, the 449-residue chain is NMPEHAGASLASQLKLDAHWMPYTANRNFLRDPRLIVAAEGSWLVDDKGRKVYDSLSGLWTCGAGHTRKEIQEAVAKQLSTLDYSPGFQYGHPLSFQLAEKITDLTPGNLNHVFFTDSGSECALTAVKMVRAYWRLKGQATKTKMIGRARGYHGVNIAGTSLGGVNGNRKLFGQPMQDVDHLPHTLLASNAYSRGMPKEGGIALADELLKLIELHDASNIAAVFVEPLAGSAGVLVPPEGYLKRNREICNQHNILLVFDEVITGFGRTGSMFGADSFGVTPDLMCIAKQVTNGAIPMGAVIASTEIYQTFMNQPTPEYAVEFPHGYTYSAHPVACAAGLAALCLLQKENLVQSVAEVAPHFEKALHGIKGAKNVIDIRNFGLAGAIQIAPRDGDAIVRPFEAGMALWKAGFYVRFGGDTLQFGPTFNSKPQDLDRLFDAVGEVLNKLLD.

A substrate-binding site is contributed by tryptophan 60. 119–120 (GS) lines the pyridoxal 5'-phosphate pocket. The residue at position 288 (lysine 288) is an N6-(pyridoxal phosphate)lysine. Threonine 327 is a binding site for pyridoxal 5'-phosphate. Substrate contacts are provided by arginine 414 and glutamine 421.

Belongs to the class-III pyridoxal-phosphate-dependent aminotransferase family. As to quaternary structure, homotetramer. The cofactor is pyridoxal 5'-phosphate.

The catalysed reaction is 3-oxopropanoate + L-alanine = beta-alanine + pyruvate. Catalyzes transamination between a variety of omega-amino acids, mono and diamines, and pyruvate. Plays a pivotal role in the metabolism of the omega amino acids. The chain is Omega-amino acid--pyruvate aminotransferase from Pseudomonas putida (Arthrobacter siderocapsulatus).